The sequence spans 4731 residues: Dynein axonemal heavy chain 8 (4731 aa).

The disordered stretch occupies residues 1-145 (MESEEGNAEP…SKFRRSMTGI (145 aa)). Residues 9–55 (EPPPPSEEAPPPVVEEAPPPLPPEDTAPPPPEEQAPPPEGDAAPPPT) show a composition bias toward pro residues. A compositionally biased stretch (basic and acidic residues) spans 66-75 (EAPHPEDPKL). A compositionally biased stretch (acidic residues) spans 94–106 (SDEEVTLPEDEES). Residues 122–133 (SVLSDGISQSSR) show a composition bias toward polar residues. Residues 145–169 (IPNLQETLKEKQARFREARENRKMK) adopt a coiled-coil conformation. At Ser917 the chain carries Phosphoserine. Residues 1177 to 1201 (FQNNSRGSDQPPASGKPLKKEERSF) form a disordered region. Positions 1543-1567 (DVDIEKINAELQEFQNRCRKLPRAL) form a coiled coil. 4 AAA regions span residues 2049 to 2271 (YQNE…VLRT), 2331 to 2550 (SAVD…KLSL), 2657 to 2910 (FYPT…IWQG), and 3021 to 3275 (QFNE…YRRR). Residues 2087–2094 (GPAGTGKT) and 2369–2376 (GPSGSGKT) contribute to the ATP site. The segment at 3290 to 3587 (YKSIYTDKVK…MDLLNDADMC (298 aa)) is stalk. Coiled coils occupy residues 3313-3405 (DKLM…ALNT), 3531-3583 (LKAN…LLND), and 3836-3871 (RVILTEKQELESERVKLLEDVTFNKRKMKELEDNLL). AAA stretches follow at residues 3673-3903 (LVDP…EVSE) and 4118-4332 (ARKY…FIQN).

Belongs to the dynein heavy chain family. As to quaternary structure, consists of at least two heavy chains and a number of intermediate and light chains. In terms of tissue distribution, isoform 1 and/or isoform 2 are expressed in spermatocytes and mature sperm (at protein level). Testis-specific. Accumulates exclusively in mid to late spermatocytes.

The protein resides in the cytoplasm. It is found in the cytoskeleton. Its subcellular location is the flagellum axoneme. Force generating protein component of the outer dynein arms (ODAs) in the sperm flagellum. Produces force towards the minus ends of microtubules. Dynein has ATPase activity; the force-producing power stroke is thought to occur on release of ADP. Involved in sperm motility; implicated in sperm flagellar assembly. This Mus musculus (Mouse) protein is Dynein axonemal heavy chain 8 (Dnah8).